A 78-amino-acid polypeptide reads, in one-letter code: DNA-directed RNA polymerase subunit omega (78 aa).

It belongs to the RNA polymerase subunit omega family. In cyanobacteria the RNAP catalytic core is composed of 2 alpha, 1 beta, 1 beta', 1 gamma and 1 omega subunit. When a sigma factor is associated with the core the holoenzyme is formed, which can initiate transcription.

It catalyses the reaction RNA(n) + a ribonucleoside 5'-triphosphate = RNA(n+1) + diphosphate. Functionally, promotes RNA polymerase assembly. Latches the N- and C-terminal regions of the beta' subunit thereby facilitating its interaction with the beta and alpha subunits. This chain is DNA-directed RNA polymerase subunit omega, found in Prochlorococcus marinus (strain MIT 9312).